The primary structure comprises 383 residues: L-Ala-D/L-Glu epimerase (383 aa).

Substrate-binding positions include Arg68, Tyr94, and 198 to 200 (KVK). Mg(2+) contacts are provided by Asp224, Glu251, and Asp276. Residues Lys298, 326–328 (CMT), and 348–350 (DLD) contribute to the substrate site.

This sequence belongs to the mandelate racemase/muconate lactonizing enzyme family. The cofactor is Mg(2+).

It catalyses the reaction L-alanyl-L-glutamate = L-alanyl-D-glutamate. Functionally, catalyzes the epimerization of L-Ala-D-Glu to L-Ala-L-Glu and may play a role in the metabolism of the murein peptide, of which L-Ala-D-Glu is a component. Is also able to catalyze the epimerization of L-Ala-D-Asp, L-Ala-L-Glu, L-Ala-L-Ser, L-Ala-L-Pro, L-Ala-L-L-Val, L-Ala-L-Thr, L-Ala-L-Leu, L-Ala-L-Ile and L-Gly-L-Glu (in vitro). The sequence is that of L-Ala-D/L-Glu epimerase from Bacteroides thetaiotaomicron (strain ATCC 29148 / DSM 2079 / JCM 5827 / CCUG 10774 / NCTC 10582 / VPI-5482 / E50).